A 440-amino-acid polypeptide reads, in one-letter code: Xylose isomerase (440 aa).

Residues H101 and D104 contribute to the active site. Mg(2+)-binding residues include E232, E268, H271, D296, D307, D309, and D339.

This sequence belongs to the xylose isomerase family. Homotetramer. Requires Mg(2+) as cofactor.

Its subcellular location is the cytoplasm. It carries out the reaction alpha-D-xylose = alpha-D-xylulofuranose. The chain is Xylose isomerase from Escherichia coli (strain SMS-3-5 / SECEC).